Consider the following 285-residue polypeptide: Bifunctional protein FolD (285 aa).

Residues 163 to 165, Ser-188, and Ala-231 each bind NADP(+); that span reads GRS.

This sequence belongs to the tetrahydrofolate dehydrogenase/cyclohydrolase family. As to quaternary structure, homodimer.

The catalysed reaction is (6R)-5,10-methylene-5,6,7,8-tetrahydrofolate + NADP(+) = (6R)-5,10-methenyltetrahydrofolate + NADPH. It carries out the reaction (6R)-5,10-methenyltetrahydrofolate + H2O = (6R)-10-formyltetrahydrofolate + H(+). It functions in the pathway one-carbon metabolism; tetrahydrofolate interconversion. Catalyzes the oxidation of 5,10-methylenetetrahydrofolate to 5,10-methenyltetrahydrofolate and then the hydrolysis of 5,10-methenyltetrahydrofolate to 10-formyltetrahydrofolate. The chain is Bifunctional protein FolD from Oenococcus oeni (strain ATCC BAA-331 / PSU-1).